A 476-amino-acid polypeptide reads, in one-letter code: Methylenetetrahydrofolate--tRNA-(uracil-5-)-methyltransferase TrmFO (476 aa).

Residue 14 to 19 (GGGLAG) coordinates FAD.

It belongs to the MnmG family. TrmFO subfamily. FAD serves as cofactor.

Its subcellular location is the cytoplasm. It catalyses the reaction uridine(54) in tRNA + (6R)-5,10-methylene-5,6,7,8-tetrahydrofolate + NADH + H(+) = 5-methyluridine(54) in tRNA + (6S)-5,6,7,8-tetrahydrofolate + NAD(+). The enzyme catalyses uridine(54) in tRNA + (6R)-5,10-methylene-5,6,7,8-tetrahydrofolate + NADPH + H(+) = 5-methyluridine(54) in tRNA + (6S)-5,6,7,8-tetrahydrofolate + NADP(+). Functionally, catalyzes the folate-dependent formation of 5-methyl-uridine at position 54 (M-5-U54) in all tRNAs. The chain is Methylenetetrahydrofolate--tRNA-(uracil-5-)-methyltransferase TrmFO from Brucella anthropi (strain ATCC 49188 / DSM 6882 / CCUG 24695 / JCM 21032 / LMG 3331 / NBRC 15819 / NCTC 12168 / Alc 37) (Ochrobactrum anthropi).